The sequence spans 502 residues: Maturase K (502 aa).

This sequence belongs to the intron maturase 2 family. MatK subfamily.

It is found in the plastid. Its subcellular location is the chloroplast. In terms of biological role, usually encoded in the trnK tRNA gene intron. Probably assists in splicing its own and other chloroplast group II introns. The chain is Maturase K from Brassica oleracea (Wild cabbage).